The sequence spans 452 residues: Bifunctional protein GlmU (452 aa).

The segment at 1-224 is pyrophosphorylase; the sequence is MNIVILAAGM…VWETHGVNSK (224 aa). UDP-N-acetyl-alpha-D-glucosamine is bound by residues 6-9, Lys-20, Gln-71, 76-77, 98-100, Gly-135, Glu-149, Asn-164, and Asn-222; these read LAAG, GT, and YGD. Asp-100 serves as a coordination point for Mg(2+). Asn-222 is a binding site for Mg(2+). Positions 225 to 245 are linker; that stretch reads VQLAELERVHQNNIARALLEH. The interval 246-452 is N-acetyltransferase; the sequence is GVTLADPARI…GWQRPVKIKK (207 aa). Arg-328 and Lys-346 together coordinate UDP-N-acetyl-alpha-D-glucosamine. Catalysis depends on His-358, which acts as the Proton acceptor. 2 residues coordinate UDP-N-acetyl-alpha-D-glucosamine: Tyr-361 and Asn-372. Residues Ala-375, 381–382, Ser-400, Ala-418, and Arg-435 each bind acetyl-CoA; that span reads NY.

In the N-terminal section; belongs to the N-acetylglucosamine-1-phosphate uridyltransferase family. The protein in the C-terminal section; belongs to the transferase hexapeptide repeat family. In terms of assembly, homotrimer. The cofactor is Mg(2+).

It localises to the cytoplasm. It carries out the reaction alpha-D-glucosamine 1-phosphate + acetyl-CoA = N-acetyl-alpha-D-glucosamine 1-phosphate + CoA + H(+). The enzyme catalyses N-acetyl-alpha-D-glucosamine 1-phosphate + UTP + H(+) = UDP-N-acetyl-alpha-D-glucosamine + diphosphate. The protein operates within nucleotide-sugar biosynthesis; UDP-N-acetyl-alpha-D-glucosamine biosynthesis; N-acetyl-alpha-D-glucosamine 1-phosphate from alpha-D-glucosamine 6-phosphate (route II): step 2/2. It functions in the pathway nucleotide-sugar biosynthesis; UDP-N-acetyl-alpha-D-glucosamine biosynthesis; UDP-N-acetyl-alpha-D-glucosamine from N-acetyl-alpha-D-glucosamine 1-phosphate: step 1/1. Its pathway is bacterial outer membrane biogenesis; LPS lipid A biosynthesis. Functionally, catalyzes the last two sequential reactions in the de novo biosynthetic pathway for UDP-N-acetylglucosamine (UDP-GlcNAc). The C-terminal domain catalyzes the transfer of acetyl group from acetyl coenzyme A to glucosamine-1-phosphate (GlcN-1-P) to produce N-acetylglucosamine-1-phosphate (GlcNAc-1-P), which is converted into UDP-GlcNAc by the transfer of uridine 5-monophosphate (from uridine 5-triphosphate), a reaction catalyzed by the N-terminal domain. The polypeptide is Bifunctional protein GlmU (Herminiimonas arsenicoxydans).